The primary structure comprises 186 residues: ATP synthase subunit delta (186 aa).

The protein belongs to the ATPase delta chain family. In terms of assembly, F-type ATPases have 2 components, F(1) - the catalytic core - and F(0) - the membrane proton channel. F(1) has five subunits: alpha(3), beta(3), gamma(1), delta(1), epsilon(1). F(0) has three main subunits: a(1), b(2) and c(10-14). The alpha and beta chains form an alternating ring which encloses part of the gamma chain. F(1) is attached to F(0) by a central stalk formed by the gamma and epsilon chains, while a peripheral stalk is formed by the delta and b chains.

It localises to the cell inner membrane. Its function is as follows. F(1)F(0) ATP synthase produces ATP from ADP in the presence of a proton or sodium gradient. F-type ATPases consist of two structural domains, F(1) containing the extramembraneous catalytic core and F(0) containing the membrane proton channel, linked together by a central stalk and a peripheral stalk. During catalysis, ATP synthesis in the catalytic domain of F(1) is coupled via a rotary mechanism of the central stalk subunits to proton translocation. This protein is part of the stalk that links CF(0) to CF(1). It either transmits conformational changes from CF(0) to CF(1) or is implicated in proton conduction. In Brucella abortus (strain S19), this protein is ATP synthase subunit delta.